The sequence spans 2567 residues: Unconventional myosin-XVIIIb (2567 aa).

The interval 41–508 (LVRGTEKEAK…SRDSDQAPED (468 aa)) is disordered. Residues 44–54 (GTEKEAKEARQ) show a composition bias toward basic and acidic residues. The span at 71–104 (SISQPNSKSSSGTRSGSQQISQDDQSSSPGSSDI) shows a compositional bias: low complexity. Basic and acidic residues-rich tracts occupy residues 105-116 (LGKESEGSRSPD) and 160-176 (LDPDSAKPEKTHPHDAP). Residues 196 to 206 (SRTPCGSQAST) show a composition bias toward polar residues. Basic and acidic residues-rich tracts occupy residues 251–265 (TELKEAEPQGKDRQG), 278–287 (RPGKAEKEGA), and 326–349 (SKWDGPQNKKDKEGVLLSKAEKTG). Residues 350–362 (EPQTQMEKTSQVQ) are compositionally biased toward polar residues. Composition is skewed to basic and acidic residues over residues 367–377 (DDLRMGEKAGE), 410–420 (SQTEKGCEAPK), 471–485 (LEKDAERPRIRKENQ), and 492–508 (EEGKGGQSRDSDQAPED). One can recognise a Myosin motor domain in the interval 571–1333 (DQVEDLASLI…VISRLEKQRE (763 aa)). 660-667 (GWSGAGKT) is an ATP binding site. The tract at residues 1208-1232 (VESRSGQESPPPPQPGRDKPGAGGP) is disordered. Residues 1213-1240 (GQESPPPPQPGRDKPGAGGPLALDIPAL) form a GPA region. Ser1216 carries the post-translational modification Phosphoserine. The IQ domain maps to 1336 to 1365 (VSQSIVLFQAACKGFLSRQEFKKLKIRRLA). Coiled-coil stretches lie at residues 1396-1783 (SATI…GLIG), 1825-1961 (KTSV…STVD), and 2014-2090 (ESQQ…VASS). The interval 1426–2083 (NELRQNTDLL…IRRIADLQAA (658 aa)) is tail. Residue Ser1829 is modified to Phosphoserine. Positions 2139–2153 (TMRTPSRQSATSSRI) are enriched in polar residues. Disordered regions lie at residues 2139–2194 (TMRT…PVSP) and 2217–2249 (STERLEPASSPLASRSTNTSPLSREKLPSPSAA). The segment covering 2158–2167 (INEEAGDTER) has biased composition (basic and acidic residues). Over residues 2168–2185 (TQSALALSRARSTNVHSK) the composition is skewed to polar residues. Ser2193 carries the post-translational modification Phosphoserine. Positions 2227 to 2238 (PLASRSTNTSPL) are enriched in polar residues. 2 positions are modified to phosphoserine: Ser2296 and Ser2309. The disordered stretch occupies residues 2357–2376 (SRPSMGRKLSSPTTPRDMLL). Ser2377 bears the Phosphoserine mark. 2 disordered regions span residues 2444 to 2471 (FLPAIRKPQTPTSLAGSAKGGQDGSQRS) and 2494 to 2567 (KSPE…YLQK). Basic and acidic residues predominate over residues 2494–2504 (KSPEPKEDPAH). Residues 2506 to 2520 (SDSSSSSGSIVSFKS) are compositionally biased toward low complexity. Residues 2537–2556 (GGERTSPERREPGTGRKDDD) show a composition bias toward basic and acidic residues.

Belongs to the TRAFAC class myosin-kinesin ATPase superfamily. Myosin family. In terms of assembly, homodimer. May interact with F actin through the GPA motif (Gly/Pro/Ala-rich). Selectively expressed in cardiac and skeletal muscles. Weakly expressed in testis, pancreas, placenta, prostate, lung and thymus.

It is found in the cytoplasm. The protein resides in the nucleus. It localises to the myofibril. Its subcellular location is the sarcomere. May be involved in intracellular trafficking of the muscle cell when in the cytoplasm, whereas entering the nucleus, may be involved in the regulation of muscle specific genes. May play a role in the control of tumor development and progression; restored MYO18B expression in lung cancer cells suppresses anchorage-independent growth. In Homo sapiens (Human), this protein is Unconventional myosin-XVIIIb (MYO18B).